A 188-amino-acid chain; its full sequence is dCTP deaminase (188 aa).

Residues 111–116 (KSTYAR), 135–137 (TLE), glutamine 156, tyrosine 170, and glutamine 180 contribute to the dCTP site. Glutamate 137 acts as the Proton donor/acceptor in catalysis.

It belongs to the dCTP deaminase family. In terms of assembly, homotrimer.

The enzyme catalyses dCTP + H2O + H(+) = dUTP + NH4(+). It functions in the pathway pyrimidine metabolism; dUMP biosynthesis; dUMP from dCTP (dUTP route): step 1/2. Functionally, catalyzes the deamination of dCTP to dUTP. The protein is dCTP deaminase of Pseudomonas putida (strain W619).